Here is a 276-residue protein sequence, read N- to C-terminus: Rhamnulose-1-phosphate aldolase (276 aa).

Glutamate 117 is an active-site residue. Residues histidine 141, histidine 143, and histidine 212 each coordinate Zn(2+).

It belongs to the aldolase class II family. RhaD subfamily. Homotetramer. Zn(2+) serves as cofactor.

It localises to the cytoplasm. The enzyme catalyses L-rhamnulose 1-phosphate = (S)-lactaldehyde + dihydroxyacetone phosphate. The protein operates within carbohydrate degradation; L-rhamnose degradation; glycerone phosphate from L-rhamnose: step 3/3. Catalyzes the reversible cleavage of L-rhamnulose-1-phosphate to dihydroxyacetone phosphate (DHAP) and L-lactaldehyde. In Klebsiella pneumoniae subsp. pneumoniae (strain ATCC 700721 / MGH 78578), this protein is Rhamnulose-1-phosphate aldolase.